A 339-amino-acid chain; its full sequence is MHRTYSLRNSRAPTASQLQNPPPPPSTTKGRFFGKGGLAYSFRRSAAGAFGPELSRKLSQLVKIEKNVLRSMELTANERRDAAKQLSIWGLENDDDVSDITDKLGVLIYEVSELDDQFIDRYDQYRLTLKSIRDIEGSVQPSRDRKDKITDKIAYLKYKDPQSPKIEVLEQELVRAEAESLVAEAQLSNITRSKLRAAFNYQFDSIIEHSEKIALIAGYGKALLELLDDSPVTPGETRPAYDGYEASKQIIIDAESALNEWTLDSAQVKPTLSFKQDYEDFEPEEGEEEEEEDGQGRWSEDEQEDGQIEEPEQEEEGAVEEHEQVGHQQSESLPQQTTA.

The segment covering 1–19 (MHRTYSLRNSRAPTASQLQ) has biased composition (polar residues). The disordered stretch occupies residues 1–31 (MHRTYSLRNSRAPTASQLQNPPPPPSTTKGR). The residue at position 14 (threonine 14) is a Phosphothreonine. Serine 16 carries the post-translational modification Phosphoserine. A Glycyl lysine isopeptide (Lys-Gly) (interchain with G-Cter in ubiquitin) cross-link involves residue lysine 29. 4 positions are modified to phosphoserine: serine 45, serine 98, serine 163, and serine 230. Threonine 233 is subject to Phosphothreonine. The disordered stretch occupies residues 273–339 (SFKQDYEDFE…SESLPQQTTA (67 aa)). Positions 279–293 (EDFEPEEGEEEEEED) are enriched in acidic residues. Position 299 is a phosphoserine (serine 299). Residues 301 to 318 (DEQEDGQIEEPEQEEEGA) are compositionally biased toward acidic residues. The segment covering 326–339 (GHQQSESLPQQTTA) has biased composition (polar residues).

Post-translationally, phosphorylated by PKH1 and PKH2. Phosphorylation is inhibited by sphingolipid long chain bases (LCBs).

The protein resides in the lipid droplet. In terms of biological role, negative regulator of cell wall integrity (CWI) in unstressed cells, probably by inhibiting protein kinase PKH1/PHK2 activity and regulating their downstream CWI pathways PKC1-MAP kinase pathway and protein kinase YPK1 pathway. Activity may be regulated by the transient increase of sphingolipid long chain bases (LCBs) during heat stress. This is Sphingolipid long chain base-responsive protein PIL1 (PIL1) from Saccharomyces cerevisiae (strain ATCC 204508 / S288c) (Baker's yeast).